Here is a 328-residue protein sequence, read N- to C-terminus: 2,4-dinitroanisole O-demethylase subunit alpha (328 aa).

A propeptide spanning residues 1–9 (MSVTSQTSS) is cleaved from the precursor. Residues His101, His103, Asp105, His168, His225, and Cys247 each contribute to the Zn(2+) site.

Belongs to the metallo-beta-lactamase superfamily. Part of the complex DnhAB composed of the 2,4-dinitroanisole O-demethylase alpha (DnhA) and beta (DnhB) subunits. It depends on Zn(2+) as a cofactor.

It carries out the reaction 2,4-dinitroanisole + H2O = 2,4-dinitrophenol + methanol + H(+). Involved in the degradation of 2,4-dinitroanisole (DNAN), an insensitive munition ingredient used in explosive formulations as a replacement for 2,4,6-trinitrotoluene (TNT). Catalyzes the removal of the methyl group from 2,4-dinitroanisole (DNAN) to yield 2,4-dinitrophenol (2,4-DNP) and methanol. This is 2,4-dinitroanisole O-demethylase subunit alpha from Nocardioides sp. (strain JS1661).